The chain runs to 316 residues: Taste receptor type 2 member 3 (316 aa).

The Extracellular segment spans residues 1-7 (MLGFTEG). A helical transmembrane segment spans residues 8-28 (IFLVLTVTEFILGNLVNGFIV). Residues 29–50 (SVNGSHWFKSKKISLSDFIITS) lie on the Cytoplasmic side of the membrane. A helical membrane pass occupies residues 51–71 (LALFRIFLLWIIFTDSLIIVF). The Extracellular segment spans residues 72 to 86 (SYHTHDSGIRMQLID). A helical transmembrane segment spans residues 87–107 (VFWTFTNHFSIWLISCLSVFY). Residues 108–128 (CLKIATFSHPSFLWLKWRASR) lie on the Cytoplasmic side of the membrane. The chain crosses the membrane as a helical span at residues 129-149 (VVVGMLWGALVLSCVCTMSLM). Residues 150 to 186 (NEFKIYSALTGSRDTQNMTEYIRLKRHEYNLMHVLGN) are Extracellular-facing. The N-linked (GlcNAc...) asparagine glycan is linked to asparagine 166. The chain crosses the membrane as a helical span at residues 187–207 (LWKIPSLIVSLIAYFLLLLSL). The Cytoplasmic portion of the chain corresponds to 208 to 234 (GKHTQQMQKYSVGSRDQSAEAHRRAMR). Residues 235–255 (IILSFLLFFLFYFLSFVILSS) traverse the membrane as a helical segment. Residues 256 to 266 (SRFLPETKIAR) lie on the Extracellular side of the membrane. Residues 267-287 (IIGVVITMSYLVGDSLILILG) form a helical membrane-spanning segment. Residues 288–316 (NNKLKQTFVAILPCECGHPKPGSKRFFAS) are Cytoplasmic-facing.

The protein belongs to the G-protein coupled receptor T2R family.

It is found in the membrane. Gustducin-coupled receptor implicated in the perception of bitter compounds in the oral cavity and the gastrointestinal tract. Signals through PLCB2 and the calcium-regulated cation channel TRPM5. This Rattus norvegicus (Rat) protein is Taste receptor type 2 member 3.